The chain runs to 391 residues: ATP phosphoribosyltransferase regulatory subunit (391 aa).

This sequence belongs to the class-II aminoacyl-tRNA synthetase family. HisZ subfamily. In terms of assembly, heteromultimer composed of HisG and HisZ subunits.

The protein localises to the cytoplasm. The protein operates within amino-acid biosynthesis; L-histidine biosynthesis; L-histidine from 5-phospho-alpha-D-ribose 1-diphosphate: step 1/9. Required for the first step of histidine biosynthesis. May allow the feedback regulation of ATP phosphoribosyltransferase activity by histidine. The protein is ATP phosphoribosyltransferase regulatory subunit of Prochlorococcus marinus (strain SARG / CCMP1375 / SS120).